Reading from the N-terminus, the 78-residue chain is Apolipoprotein C-I (78 aa).

The N-terminal stretch at 1-26 (MRLILWLPVLVVVLLMVLEGPAPAQG) is a signal peptide.

Belongs to the apolipoprotein C1 family.

It is found in the secreted. In terms of biological role, inhibitor of lipoprotein binding to the low density lipoprotein (LDL) receptor, LDL receptor-related protein, and very low density lipoprotein (VLDL) receptor. Associates with high density lipoproteins (HDL) and the triacylglycerol-rich lipoproteins in the plasma and makes up about 10% of the protein of the VLDL and 2% of that of HDL. Appears to interfere directly with fatty acid uptake and is also the major plasma inhibitor of cholesteryl ester transfer protein (CETP). Binds free fatty acids and reduces their intracellular esterification. Modulates the interaction of APOE with beta-migrating VLDL and inhibits binding of beta-VLDL to the LDL receptor-related protein. The sequence is that of Apolipoprotein C-I (APOC1) from Lynx pardinus (Iberian lynx).